A 222-amino-acid chain; its full sequence is Deoxyribose-phosphate aldolase (222 aa).

The active-site Proton donor/acceptor is D89. Catalysis depends on K152, which acts as the Schiff-base intermediate with acetaldehyde. K181 serves as the catalytic Proton donor/acceptor.

It belongs to the DeoC/FbaB aldolase family. DeoC type 1 subfamily.

It is found in the cytoplasm. The catalysed reaction is 2-deoxy-D-ribose 5-phosphate = D-glyceraldehyde 3-phosphate + acetaldehyde. The protein operates within carbohydrate degradation; 2-deoxy-D-ribose 1-phosphate degradation; D-glyceraldehyde 3-phosphate and acetaldehyde from 2-deoxy-alpha-D-ribose 1-phosphate: step 2/2. Catalyzes a reversible aldol reaction between acetaldehyde and D-glyceraldehyde 3-phosphate to generate 2-deoxy-D-ribose 5-phosphate. The protein is Deoxyribose-phosphate aldolase of Clostridium novyi (strain NT).